The primary structure comprises 231 residues: Large ribosomal subunit protein uL1 (231 aa).

The protein belongs to the universal ribosomal protein uL1 family. Part of the 50S ribosomal subunit.

In terms of biological role, binds directly to 23S rRNA. The L1 stalk is quite mobile in the ribosome, and is involved in E site tRNA release. Its function is as follows. Protein L1 is also a translational repressor protein, it controls the translation of the L11 operon by binding to its mRNA. This chain is Large ribosomal subunit protein uL1, found in Chromobacterium violaceum (strain ATCC 12472 / DSM 30191 / JCM 1249 / CCUG 213 / NBRC 12614 / NCIMB 9131 / NCTC 9757 / MK).